Consider the following 261-residue polypeptide: Putative cytochrome YdhU (261 aa).

Residues 25–45 (FWPVWLIIAGVLLVGMWLVLG) form a helical membrane-spanning segment. His-77 is a heme b binding site. 3 consecutive transmembrane segments (helical) span residues 81-101 (ALLFVLLLASGLINHFAMVGA), 108-128 (VAVHEVCGFLLLACWLGFVLI), and 182-202 (VAYVGVMYGLLPLLLLTGLLC). His-111 serves as a coordination point for heme b. 2 residues coordinate heme b: His-223 and His-237. Residues 224-244 (FALAFISLFFIFGHLYLCTTG) traverse the membrane as a helical segment. His-237 is an a menaquinone binding site.

It belongs to the PhsC family. Requires heme as cofactor.

The protein localises to the cell inner membrane. This Escherichia coli (strain K12) protein is Putative cytochrome YdhU (ydhU).